A 157-amino-acid chain; its full sequence is SsrA-binding protein (157 aa).

Residues 132 to 157 form a disordered region; the sequence is VHDKRQAQKDKDWAREKDRLFKKAYK. The segment covering 135-157 has biased composition (basic and acidic residues); the sequence is KRQAQKDKDWAREKDRLFKKAYK.

Belongs to the SmpB family.

It is found in the cytoplasm. Required for rescue of stalled ribosomes mediated by trans-translation. Binds to transfer-messenger RNA (tmRNA), required for stable association of tmRNA with ribosomes. tmRNA and SmpB together mimic tRNA shape, replacing the anticodon stem-loop with SmpB. tmRNA is encoded by the ssrA gene; the 2 termini fold to resemble tRNA(Ala) and it encodes a 'tag peptide', a short internal open reading frame. During trans-translation Ala-aminoacylated tmRNA acts like a tRNA, entering the A-site of stalled ribosomes, displacing the stalled mRNA. The ribosome then switches to translate the ORF on the tmRNA; the nascent peptide is terminated with the 'tag peptide' encoded by the tmRNA and targeted for degradation. The ribosome is freed to recommence translation, which seems to be the essential function of trans-translation. This Francisella tularensis subsp. tularensis (strain FSC 198) protein is SsrA-binding protein.